The primary structure comprises 201 residues: Small ribosomal subunit protein uS10m (201 aa).

Belongs to the universal ribosomal protein uS10 family. As to quaternary structure, component of the mitochondrial small ribosomal subunit (mt-SSU). Mature mammalian 55S mitochondrial ribosomes consist of a small (28S) and a large (39S) subunit. The 28S small subunit contains a 12S ribosomal RNA (12S mt-rRNA) and 30 different proteins. The 39S large subunit contains a 16S rRNA (16S mt-rRNA), a copy of mitochondrial valine transfer RNA (mt-tRNA(Val)), which plays an integral structural role, and 52 different proteins.

Its subcellular location is the mitochondrion. The protein is Small ribosomal subunit protein uS10m (MRPS10) of Homo sapiens (Human).